Consider the following 162-residue polypeptide: 3-isopropylmalate dehydratase small subunit (162 aa).

Belongs to the LeuD family. LeuD type 2 subfamily. As to quaternary structure, heterodimer of LeuC and LeuD.

It catalyses the reaction (2R,3S)-3-isopropylmalate = (2S)-2-isopropylmalate. It functions in the pathway amino-acid biosynthesis; L-leucine biosynthesis; L-leucine from 3-methyl-2-oxobutanoate: step 2/4. Catalyzes the isomerization between 2-isopropylmalate and 3-isopropylmalate, via the formation of 2-isopropylmaleate. This chain is 3-isopropylmalate dehydratase small subunit, found in Pyrobaculum neutrophilum (strain DSM 2338 / JCM 9278 / NBRC 100436 / V24Sta) (Thermoproteus neutrophilus).